The chain runs to 726 residues: Ribonuclease R (726 aa).

The region spanning 262 to 590 (RIDLRHLPFF…LVHRVIKNLL (329 aa)) is the RNB domain. The region spanning 642 to 723 (GDVLTGVISN…NERKIELSLY (82 aa)) is the S1 motif domain.

Belongs to the RNR ribonuclease family. RNase R subfamily. As to quaternary structure, monomer.

The protein localises to the cytoplasm. It catalyses the reaction Exonucleolytic cleavage in the 3'- to 5'-direction to yield nucleoside 5'-phosphates.. 3'-5' exoribonuclease that releases 5'-nucleoside monophosphates and is involved in maturation of structured RNAs. The protein is Ribonuclease R of Buchnera aphidicola subsp. Schizaphis graminum (strain Sg).